The following is a 1438-amino-acid chain: Membrane-anchored lipid-binding protein YSP2 (1438 aa).

Basic and acidic residues predominate over residues 1-17 (MRDEATRKKRSFSDGHF). Disordered regions lie at residues 1–97 (MRDE…SHTP), 174–194 (KVKH…NERP), 200–219 (QKDD…SAPN), 285–308 (QQQH…QNPN), 338–418 (TSGP…KVKF), 455–485 (DENN…LGPK), and 505–543 (SQSN…RYSS). The Cytoplasmic portion of the chain corresponds to 1-1277 (MRDEATRKKR…SAFSMLQQVN (1277 aa)). Residue serine 13 is modified to Phosphoserine. Residues 18–29 (FKKLKLMSRKKQ) are compositionally biased toward basic residues. Positions 30-44 (PVMERSKTTRTRKES) are enriched in basic and acidic residues. A compositionally biased stretch (low complexity) spans 45-58 (TNSAAKSSLSLRRA). The segment covering 74 to 97 (IGSTNEGVAGNSGSNSPAQYSHTP) has biased composition (polar residues). 2 stretches are compositionally biased toward low complexity: residues 286-298 (QQHP…GPLP) and 374-398 (PTNT…ANSN). The residue at position 411 (serine 411) is a Phosphoserine. The span at 455 to 470 (DENNTNNNPNASSTNL) shows a compositional bias: low complexity. The segment covering 471–485 (SHISKSNVNNNLGPK) has biased composition (polar residues). Residue serine 596 is modified to Phosphoserine. A GRAM domain is found at 648-716 (EFHTLFKDCD…KEIVQIEKKT (69 aa)). The tract at residues 777–843 (SSSAFFDDSD…LGPNKHSPTT (67 aa)) is disordered. Acidic residues predominate over residues 783-800 (DDSDDNDDDGDLDDDDPD). The span at 818–832 (NESNDLGKNQKSTNY) shows a compositional bias: polar residues. The 168-residue stretch at 851–1018 (NDHLVIEANI…EIKKILSDED (168 aa)) folds into the VASt 1 domain. At serine 1032 the chain carries Phosphoserine. Residues 1059-1225 (DDTVIDEKIN…DLKKIISNAS (167 aa)) form the VASt 2 domain. The segment at 1225–1257 (SSTKKKSRRRGKTVNKRKSSPSTIKNEKNEENF) is disordered. Positions 1227 to 1243 (TKKKSRRRGKTVNKRKS) are enriched in basic residues. The chain crosses the membrane as a helical span at residues 1278–1298 (ITSVQGIMTIISFFICLIFFF). Topologically, residues 1299–1438 (RLLFHSKNTS…DNTSATNQLL (140 aa)) are lumenal. Residues asparagine 1306, asparagine 1373, and asparagine 1430 are each glycosylated (N-linked (GlcNAc...) asparagine).

Belongs to the YSP2 family.

The protein localises to the mitochondrion membrane. It localises to the endoplasmic reticulum membrane. Its function is as follows. Involved in induction of programmed cell death in response to reactive oxygen species (ROS). May be involved in sterol transfer between intracellular membranes. In Saccharomyces cerevisiae (strain ATCC 204508 / S288c) (Baker's yeast), this protein is Membrane-anchored lipid-binding protein YSP2.